A 358-amino-acid chain; its full sequence is Alanine racemase (358 aa).

The active-site Proton acceptor; specific for D-alanine is lysine 34. Lysine 34 is modified (N6-(pyridoxal phosphate)lysine). Substrate is bound at residue arginine 129. Tyrosine 254 acts as the Proton acceptor; specific for L-alanine in catalysis. Residue methionine 302 participates in substrate binding.

This sequence belongs to the alanine racemase family. Requires pyridoxal 5'-phosphate as cofactor.

The enzyme catalyses L-alanine = D-alanine. Its pathway is amino-acid biosynthesis; D-alanine biosynthesis; D-alanine from L-alanine: step 1/1. In terms of biological role, catalyzes the interconversion of L-alanine and D-alanine. May also act on other amino acids. In Aliivibrio salmonicida (strain LFI1238) (Vibrio salmonicida (strain LFI1238)), this protein is Alanine racemase (alr).